Reading from the N-terminus, the 186-residue chain is GTP-dependent dephospho-CoA kinase (186 aa).

Positions 43, 44, 45, 62, 120, and 143 each coordinate GTP.

The protein belongs to the GTP-dependent DPCK family.

The catalysed reaction is 3'-dephospho-CoA + GTP = GDP + CoA + H(+). Its pathway is cofactor biosynthesis; coenzyme A biosynthesis. Its function is as follows. Catalyzes the GTP-dependent phosphorylation of the 3'-hydroxyl group of dephosphocoenzyme A to form coenzyme A (CoA). This is GTP-dependent dephospho-CoA kinase from Haloquadratum walsbyi (strain DSM 16790 / HBSQ001).